The chain runs to 290 residues: PIH1 domain-containing protein 1 (290 aa).

Residues 34 to 50 (ELQQAQTSRPESTQIQP) show a composition bias toward polar residues. A disordered region spans residues 34–53 (ELQQAQTSRPESTQIQPQPG). Serine 173 carries the post-translational modification Phosphoserine.

Belongs to the PIH1 family. In terms of assembly, component of the R2TP complex composed at least of RUVBL1, RUVBL2, RPAP3 and PIHD1. Component of the PAQosome complex which is responsible for the biogenesis of several protein complexes and which consists of R2TP complex members RUVBL1, RUVBL2, RPAP3 and PIH1D1, URI complex members PFDN2, PFDN6, PDRG1, UXT and URI1 as well as ASDURF, POLR2E and DNAAF10/WDR92. Interacts with phosphorylated TELO2 and mediates interaction of TELO2 with the R2TP complex. Interacts with phosphorylated ECD, EFTUD2/SNRP116, RPB1 and UBR5 and with RPB1 in a phosphorylation-independent manner. Interacts with the core C/D box snoRNP particle components NOP58 and FBL and with RUVBL1/TIP49. Interacts with RPAP3 and DNAAF10. Interacts with histone H4 and with SWI/SNF complex member SMARCB1/SNF5. Interacts with the mTORC1 complex member RPTOR. Interacts with MSL1.

The protein resides in the nucleus. Its function is as follows. Involved in the assembly of C/D box small nucleolar ribonucleoprotein (snoRNP) particles. Recruits the SWI/SNF complex to the core promoter of rRNA genes and enhances pre-rRNA transcription. Mediates interaction of TELO2 with the R2TP complex which is necessary for the stability of MTOR and SMG1. Positively regulates the assembly and activity of the mTORC1 complex. The sequence is that of PIH1 domain-containing protein 1 (PIH1D1) from Bos taurus (Bovine).